The chain runs to 126 residues: UPF0538 protein C2orf76 homolog (126 aa).

This sequence belongs to the UPF0538 family.

The chain is UPF0538 protein C2orf76 homolog from Bos taurus (Bovine).